A 767-amino-acid polypeptide reads, in one-letter code: 5-methyltetrahydropteroyltriglutamate--homocysteine methyltransferase (767 aa).

Lysine 19 is a 5-methyltetrahydropteroyltri-L-glutamate binding site. Residue serine 89 is modified to Phosphoserine. Asparagine 126 lines the 5-methyltetrahydropteroyltri-L-glutamate pocket. Serine 242 carries the post-translational modification Phosphoserine. L-homocysteine-binding positions include 444-446 and glutamate 497; that span reads IGS. L-methionine is bound by residues 444–446 and glutamate 497; that span reads IGS. Residues aspartate 502, tyrosine 525, and 528-529 each bind 5-methyltetrahydropteroyltri-L-glutamate; that span reads RY. Threonine 566 carries the phosphothreonine modification. Tryptophan 574 lines the 5-methyltetrahydropteroyltri-L-glutamate pocket. Aspartate 612 lines the L-homocysteine pocket. Aspartate 612 is an L-methionine binding site. Position 629 is a phosphoserine (serine 629). Histidine 655, cysteine 657, and glutamate 677 together coordinate Zn(2+). Histidine 705 serves as the catalytic Proton donor. Serine 706 carries the post-translational modification Phosphoserine. Zn(2+) is bound at residue cysteine 737.

This sequence belongs to the vitamin-B12 independent methionine synthase family. It depends on Zn(2+) as a cofactor.

It catalyses the reaction 5-methyltetrahydropteroyltri-L-glutamate + L-homocysteine = tetrahydropteroyltri-L-glutamate + L-methionine. It functions in the pathway amino-acid biosynthesis; L-methionine biosynthesis via de novo pathway; L-methionine from L-homocysteine (MetE route): step 1/1. Catalyzes the transfer of a methyl group from 5-methyltetrahydrofolate to homocysteine resulting in methionine formation. This Saccharomyces cerevisiae (strain ATCC 204508 / S288c) (Baker's yeast) protein is 5-methyltetrahydropteroyltriglutamate--homocysteine methyltransferase (MET6).